The chain runs to 230 residues: Ureidoacrylate amidohydrolase RutB (230 aa).

The active-site Proton acceptor is D23. K132 is an active-site residue. Residue C165 is the Nucleophile of the active site.

It belongs to the isochorismatase family. RutB subfamily.

It carries out the reaction (Z)-3-ureidoacrylate + H2O + H(+) = (Z)-3-aminoacrylate + NH4(+) + CO2. The enzyme catalyses (Z)-3-ureidoacrylate + H2O = (Z)-3-aminoacrylate + carbamate + H(+). It catalyses the reaction (Z)-2-methylureidoacrylate + H2O + H(+) = (Z)-2-methylaminoacrylate + NH4(+) + CO2. Its function is as follows. Hydrolyzes ureidoacrylate to form aminoacrylate and carbamate. The carbamate hydrolyzes spontaneously, thereby releasing one of the nitrogen atoms of the pyrimidine ring as ammonia and one of its carbon atoms as CO2. The polypeptide is Ureidoacrylate amidohydrolase RutB (Yersinia enterocolitica serotype O:8 / biotype 1B (strain NCTC 13174 / 8081)).